The chain runs to 311 residues: Malate dehydrogenase (311 aa).

Gly-10–Gly-15 lines the NAD(+) pocket. Arg-85 and Arg-91 together coordinate substrate. NAD(+) contacts are provided by residues Asn-98 and Leu-121–Asn-123. Residues Asn-123 and Arg-154 each coordinate substrate. His-178 functions as the Proton acceptor in the catalytic mechanism.

The protein belongs to the LDH/MDH superfamily. MDH type 3 family.

It carries out the reaction (S)-malate + NAD(+) = oxaloacetate + NADH + H(+). Its function is as follows. Catalyzes the reversible oxidation of malate to oxaloacetate. The polypeptide is Malate dehydrogenase (Staphylococcus carnosus (strain TM300)).